Reading from the N-terminus, the 201-residue chain is Small ribosomal subunit protein uS4c (201 aa).

The 61-residue stretch at 91–151 (MRLDNIIFQL…TKNPEELRTI (61 aa)) folds into the S4 RNA-binding domain.

The protein belongs to the universal ribosomal protein uS4 family. As to quaternary structure, part of the 30S ribosomal subunit. Contacts protein S5. The interaction surface between S4 and S5 is involved in control of translational fidelity.

It is found in the plastid. Its subcellular location is the chloroplast. Its function is as follows. One of the primary rRNA binding proteins, it binds directly to 16S rRNA where it nucleates assembly of the body of the 30S subunit. In terms of biological role, with S5 and S12 plays an important role in translational accuracy. In Welwitschia mirabilis (Tree tumbo), this protein is Small ribosomal subunit protein uS4c (rps4).